The chain runs to 500 residues: Probable cytosol aminopeptidase (500 aa).

Mn(2+)-binding residues include K268 and D273. K280 is an active-site residue. Residues D291, D350, and E352 each coordinate Mn(2+). Residue R354 is part of the active site.

It belongs to the peptidase M17 family. It depends on Mn(2+) as a cofactor.

It localises to the cytoplasm. It carries out the reaction Release of an N-terminal amino acid, Xaa-|-Yaa-, in which Xaa is preferably Leu, but may be other amino acids including Pro although not Arg or Lys, and Yaa may be Pro. Amino acid amides and methyl esters are also readily hydrolyzed, but rates on arylamides are exceedingly low.. The catalysed reaction is Release of an N-terminal amino acid, preferentially leucine, but not glutamic or aspartic acids.. In terms of biological role, presumably involved in the processing and regular turnover of intracellular proteins. Catalyzes the removal of unsubstituted N-terminal amino acids from various peptides. The protein is Probable cytosol aminopeptidase of Aromatoleum aromaticum (strain DSM 19018 / LMG 30748 / EbN1) (Azoarcus sp. (strain EbN1)).